A 156-amino-acid polypeptide reads, in one-letter code: Ribosomal RNA large subunit methyltransferase H (156 aa).

Residues Leu-73, Gly-104, and 123–128 (LSPLTL) contribute to the S-adenosyl-L-methionine site.

The protein belongs to the RNA methyltransferase RlmH family. In terms of assembly, homodimer.

The protein resides in the cytoplasm. The enzyme catalyses pseudouridine(1915) in 23S rRNA + S-adenosyl-L-methionine = N(3)-methylpseudouridine(1915) in 23S rRNA + S-adenosyl-L-homocysteine + H(+). Functionally, specifically methylates the pseudouridine at position 1915 (m3Psi1915) in 23S rRNA. This is Ribosomal RNA large subunit methyltransferase H from Edwardsiella ictaluri (strain 93-146).